A 255-amino-acid chain; its full sequence is Probable cyclic nucleotide phosphodiesterase syc0937_d (255 aa).

The Fe cation site is built by Asp19, His21, Asp59, Asn89, His157, His196, and His198. Residues His21, Asp59, and 89 to 90 each bind AMP; that span reads NH. Residue His198 participates in AMP binding.

It belongs to the cyclic nucleotide phosphodiesterase class-III family. Fe(2+) is required as a cofactor.

The chain is Probable cyclic nucleotide phosphodiesterase syc0937_d from Synechococcus sp. (strain ATCC 27144 / PCC 6301 / SAUG 1402/1) (Anacystis nidulans).